A 384-amino-acid polypeptide reads, in one-letter code: GDSL esterase/lipase At1g28670 (384 aa).

The N-terminal stretch at M1 to A24 is a signal peptide. The active-site Nucleophile is S42. 3 N-linked (GlcNAc...) asparagine glycosylation sites follow: N105, N138, and N321. Catalysis depends on residues D346 and H349.

The protein belongs to the 'GDSL' lipolytic enzyme family.

The protein resides in the secreted. This is GDSL esterase/lipase At1g28670 from Arabidopsis thaliana (Mouse-ear cress).